Consider the following 167-residue polypeptide: Elafin (167 aa).

The signal sequence occupies residues 1–21 (MRSRSFLVLVVVFLICGTLVA). Residues 22 to 70 (QAAGRIRRPKGKGTKKILALVKGQGPVRGKDQVKGQGPVKGQDLGKSQD) constitute a propeptide that is removed on maturation. Repeat copies occupy residues 44-49 (GQGPVR), 50-55 (GKDQVK), 56-61 (GQGPVK), 62-67 (GQDLGK), 68-73 (SQDPVK), 74-79 (AQLPDK), 80-85 (GQDLGK), 86-91 (GEDSVK), 92-97 (GQDPFK), 98-103 (AQLPDK), 104-109 (LQDPVK), and 110-115 (AQPAIK). The tract at residues 44–115 (GQGPVRGKDQ…DPVKAQPAIK (72 aa)) is 12 X 6 AA tandem repeats of [GSAL]-[QEK]-[DGLP]-[APSLQ]-[VGDFI]-[KR]. The segment at 46-104 (GPVRGKDQVKGQGPVKGQDLGKSQDPVKAQLPDKGQDLGKGEDSVKGQDPFKAQLPDKL) is disordered. Residues 78 to 126 (DKGQDLGKGEDSVKGQDPFKAQLPDKLQDPVKAQPAIKRLILLTKPGSC) are 2 X tandem repeats of SVP-1 like motif. Basic and acidic residues predominate over residues 79–91 (KGQDLGKGEDSVK). 2 SVP-1 clotting repeats span residues 80-101 (GQDLGKGEDSVKGQDPFKAQLP) and 104-126 (LQDPVKAQPAIKRLILLTKPGSC). The WAP domain maps to 119-167 (LLTKPGSCPRILIRCLMVNPPNRCLSDAQCPGLKKCCEGFCGKACMDPK). 4 disulfides stabilise this stretch: C126–C155, C133–C159, C142–C154, and C148–C163.

As to expression, trachea and large intestine.

In terms of biological role, neutrophil and pancreatic elastase-specific inhibitor of skin. It may prevent elastase-mediated tissue proteolysis. This Sus scrofa (Pig) protein is Elafin.